Reading from the N-terminus, the 485-residue chain is D-alanine--D-alanyl carrier protein ligase (485 aa).

Residue Thr-144–Ser-145 participates in ATP binding. Asp-189 contacts D-alanine. Position 284–289 (Asn-284–Thr-289) interacts with ATP. Residue Val-293 participates in D-alanine binding. 2 residues coordinate ATP: Asp-365 and Lys-473. Residue Lys-473 coordinates D-alanine.

This sequence belongs to the ATP-dependent AMP-binding enzyme family. DltA subfamily.

Its subcellular location is the cytoplasm. It carries out the reaction holo-[D-alanyl-carrier protein] + D-alanine + ATP = D-alanyl-[D-alanyl-carrier protein] + AMP + diphosphate. Its pathway is cell wall biogenesis; lipoteichoic acid biosynthesis. In terms of biological role, catalyzes the first step in the D-alanylation of lipoteichoic acid (LTA), the activation of D-alanine and its transfer onto the D-alanyl carrier protein (Dcp) DltC. In an ATP-dependent two-step reaction, forms a high energy D-alanyl-AMP intermediate, followed by transfer of the D-alanyl residue as a thiol ester to the phosphopantheinyl prosthetic group of the Dcp. D-alanylation of LTA plays an important role in modulating the properties of the cell wall in Gram-positive bacteria, influencing the net charge of the cell wall. The polypeptide is D-alanine--D-alanyl carrier protein ligase (Staphylococcus epidermidis (strain ATCC 35984 / DSM 28319 / BCRC 17069 / CCUG 31568 / BM 3577 / RP62A)).